A 61-amino-acid polypeptide reads, in one-letter code: Potassium channel toxin kappa-KTx 2.8 (61 aa).

A signal peptide spans 1–21 (GTVYVFLLLLAFGIFTDISNA). A propeptide spanning residues 22–35 (CSEQMDDEDSYEVE) is cleaved from the precursor. 2 disulfide bridges follow: Cys41/Cys59 and Cys45/Cys55.

Belongs to the short scorpion toxin superfamily. Potassium channel inhibitor kappa-KTx family. Kappa-KTx 2 subfamily. In terms of tissue distribution, expressed by the venom gland.

Its subcellular location is the secreted. Voltage-gated potassium channel inhibitor (Kv) that acts on Kv1.3/KCNA3 and Kv7.1/KCNQ1. 1 uM of the toxin inhibits Kv1.3/KCNA3 currents by 35.1%, whereas 10 uM of the toxin inhibits Kv7.1/KCNQ1 currents by 44.9%. This Heterometrus petersii (Asian forest scorpion) protein is Potassium channel toxin kappa-KTx 2.8.